Consider the following 229-residue polypeptide: Cytidylate kinase (229 aa).

Position 10 to 18 (10 to 18 (GFSSCGKST)) interacts with ATP.

It belongs to the cytidylate kinase family. Type 1 subfamily.

The protein resides in the cytoplasm. It catalyses the reaction CMP + ATP = CDP + ADP. The enzyme catalyses dCMP + ATP = dCDP + ADP. This chain is Cytidylate kinase, found in Bacteroides fragilis (strain ATCC 25285 / DSM 2151 / CCUG 4856 / JCM 11019 / LMG 10263 / NCTC 9343 / Onslow / VPI 2553 / EN-2).